The sequence spans 177 residues: Large ribosomal subunit protein uL5 (177 aa).

It belongs to the universal ribosomal protein uL5 family. Part of the 50S ribosomal subunit; part of the 5S rRNA/L5/L18/L25 subcomplex. Contacts the 5S rRNA and the P site tRNA. Forms a bridge to the 30S subunit in the 70S ribosome.

Functionally, this is one of the proteins that bind and probably mediate the attachment of the 5S RNA into the large ribosomal subunit, where it forms part of the central protuberance. In the 70S ribosome it contacts protein S13 of the 30S subunit (bridge B1b), connecting the 2 subunits; this bridge is implicated in subunit movement. Contacts the P site tRNA; the 5S rRNA and some of its associated proteins might help stabilize positioning of ribosome-bound tRNAs. This is Large ribosomal subunit protein uL5 from Ehrlichia ruminantium (strain Welgevonden).